Here is a 419-residue protein sequence, read N- to C-terminus: Protein FAM217A (419 aa).

Disordered regions lie at residues 1–60 (MGRK…LENP), 96–119 (KGST…DLSE), 236–299 (SSSK…SRAL), and 317–382 (KNSK…RTKK). Residues 7-19 (ESCSSSLHVSSIS) show a composition bias toward low complexity. Positions 236-251 (SSSKAIATKAKAPKIP) are enriched in low complexity. 2 stretches are compositionally biased toward polar residues: residues 252–261 (ETSTLQTSGV) and 271–281 (NSGSGKPEQNV). 2 stretches are compositionally biased toward low complexity: residues 282–296 (SKWS…KSNS) and 334–345 (PTTTTQATQPMA).

This sequence belongs to the FAM217 family.

This chain is Protein FAM217A (Fam217a), found in Mus musculus (Mouse).